A 547-amino-acid polypeptide reads, in one-letter code: Chaperonin GroEL (547 aa).

ATP-binding positions include 30–33, lysine 51, 87–91, glycine 415, and aspartate 495; these read TLGP and DGTTT.

It belongs to the chaperonin (HSP60) family. In terms of assembly, forms a cylinder of 14 subunits composed of two heptameric rings stacked back-to-back. Interacts with the co-chaperonin GroES.

The protein resides in the cytoplasm. It catalyses the reaction ATP + H2O + a folded polypeptide = ADP + phosphate + an unfolded polypeptide.. Functionally, together with its co-chaperonin GroES, plays an essential role in assisting protein folding. The GroEL-GroES system forms a nano-cage that allows encapsulation of the non-native substrate proteins and provides a physical environment optimized to promote and accelerate protein folding. The sequence is that of Chaperonin GroEL from Pasteurella multocida (strain Pm70).